The sequence spans 261 residues: MAEAGMRKILIIGIGSGNPEHMTVQAINALNCADVLFIPTKGAKKTELAEVRRDICARYVTRKDSRTVEFAVPVRRTEGVSYDGSVDDWHAQIAGIYEALLSKELGEEGTGAFLVWGDPMLYDSTIRIVERVKARGEVAFAYDVIPGITSLQALCASHRIPLNLVGKPVEITTGRRLHESFPEKSQTSVVMLDGEQAFQRVEDPEAEIYWGAYLGTRDEIVISGRVAEVKDRILETRAAARAKMGWIMDIYLLRKGADFDE.

It carries out the reaction precorrin-5 + S-adenosyl-L-methionine + H2O = precorrin-6A + acetate + S-adenosyl-L-homocysteine + 2 H(+). It functions in the pathway cofactor biosynthesis; adenosylcobalamin biosynthesis; cob(II)yrinate a,c-diamide from precorrin-2 (aerobic route): step 5/10. In terms of biological role, catalyzes the methylation of C-1 in precorrin-5 and the subsequent extrusion of acetic acid from the resulting intermediate to form cobalt-precorrin-6A. The sequence is that of Precorrin-6A synthase [deacetylating] (cobF) from Sinorhizobium sp.